Consider the following 115-residue polypeptide: Large ribosomal subunit protein bL20 (115 aa).

Belongs to the bacterial ribosomal protein bL20 family.

Functionally, binds directly to 23S ribosomal RNA and is necessary for the in vitro assembly process of the 50S ribosomal subunit. It is not involved in the protein synthesizing functions of that subunit. The polypeptide is Large ribosomal subunit protein bL20 (Synechococcus sp. (strain CC9902)).